Consider the following 1124-residue polypeptide: Anillin (1124 aa).

An N-acetylmethionine modification is found at Met-1. Over residues 1 to 25 (MDPFTEKLLERTRARRENLQRKMAE) the composition is skewed to basic and acidic residues. The required for ubiquitination stretch occupies residues 1 to 45 (MDPFTEKLLERTRARRENLQRKMAERPTAAPRSMTHAKRARQPLS). 2 disordered regions span residues 1-113 (MDPF…ADTI) and 136-196 (ATAA…ATPV). The tract at residues 1-155 (MDPFTEKLLE…MQKLAEQRRR (155 aa)) is interaction with CD2AP. Residues 1–230 (MDPFTEKLLE…AKQNSVQEQP (230 aa)) are nuclear localization. Phosphoserine is present on residues Ser-54 and Ser-72. A compositionally biased stretch (polar residues) spans 77–96 (VEVSNLENKQPVESTSAKSC). Phosphoserine occurs at positions 97 and 102. Over residues 97 to 108 (SPSPVSPQVQPQ) the composition is skewed to low complexity. Residues 148 to 158 (KLAEQRRRWDN) show a composition bias toward basic and acidic residues. 2 positions are modified to phosphoserine: Ser-172 and Ser-182. Residue Thr-194 is modified to Phosphothreonine. Ser-225 and Ser-252 each carry phosphoserine. Residues 231–676 (GTACLSKFSS…RDLLYSIDAY (446 aa)) form an interaction with F-actin region. A Glycyl lysine isopeptide (Lys-Gly) (interchain with G-Cter in SUMO1) cross-link involves residue Lys-254. The residue at position 261 (Ser-261) is a Phosphoserine. Polar residues predominate over residues 294 to 305 (TSPVKSTTSITD). A disordered region spans residues 294–328 (TSPVKSTTSITDAKSCEGQNPELLPKTPISPLKTG). Thr-320 bears the Phosphothreonine mark. Phosphoserine is present on residues Ser-323 and Ser-339. Position 364 is a phosphothreonine (Thr-364). An N6-acetyllysine modification is found at Lys-371. The span at 380-389 (RCQEHSKESP) shows a compositional bias: basic and acidic residues. Positions 380 to 399 (RCQEHSKESPARSTPHRTPI) are disordered. 2 positions are modified to phosphothreonine: Thr-397 and Thr-401. Ser-417, Ser-419, Ser-449, Ser-485, Ser-518, Ser-553, and Ser-561 each carry phosphoserine. A coiled-coil region spans residues 569–604 (FSDVLEEGELDMEKSQEEMDQALAESSEEQEDALNI). 2 disordered regions span residues 579-600 (DMEK…EQED) and 625-664 (LVST…SLGS). Basic and acidic residues-rich tracts occupy residues 631–644 (LELK…ESPK) and 654–664 (PRAESGDSLGS). Phosphoserine is present on residues Ser-637, Ser-642, Ser-658, Ser-661, and Ser-664. Tyr-671 is subject to Phosphotyrosine. Phosphoserine is present on residues Ser-678, Ser-688, Ser-792, and Ser-927. Residues 730–1124 (QQTVIYQASQ…DACYKPIGKP (395 aa)) are localization to the cleavage furrow. Residues 983–1107 (SVEERGFLTI…WMQKLNQVLV (125 aa)) enclose the PH domain.

In terms of assembly, interacts with F-actin. Interacts with CD2AP. May interact with RHOA. Interacts with FZR1/CDH1 during mitotic exit. Phosphorylated during mitosis. Post-translationally, ubiquitinated, and this requires FZR1/CDH1. Ubiquitously expressed. Present at highest levels in the brain, at high levels in the placenta and testis, at intermediate levels in the intestine, ovary, skeletal muscle and thymus and at lower levels in heart, kidney, liver, lung, pancreas, prostate and spleen. In the kidney, it is widely expressed in tubules, but sparsely expressed in the glomerulus. Expression is significantly increased in renal biopsy specimens from idiopathic FSGS. Overexpressed in many tumor types including breast, colorectal, endometrial, hepatic, kidney, lung, ovarian and pancreatic tumors.

It is found in the nucleus. The protein resides in the cytoplasm. It localises to the cytoskeleton. The protein localises to the cell cortex. Its subcellular location is the cell projection. It is found in the bleb. Required for cytokinesis. Essential for the structural integrity of the cleavage furrow and for completion of cleavage furrow ingression. Plays a role in bleb assembly during metaphase and anaphase of mitosis. May play a significant role in podocyte cell migration. This chain is Anillin (ANLN), found in Homo sapiens (Human).